Consider the following 1001-residue polypeptide: Ribonuclease E/G-like protein, chloroplastic (1001 aa).

The transit peptide at 1–48 directs the protein to the chloroplast; it reads MDVTEVPWRRLPQFSVSSRASWLVSSGFPLSSYMFSHVERGKTFRLTL. The region spanning 76-185 is the CBM20 domain; that stretch reads SRLKGLCEVV…KIIIRDSWMS (110 aa). Mg(2+) is bound at residue Asp-755. The stretch at 769 to 789 forms a coiled coil; that stretch reads QEKAILEVNLAAARQIAREIR. Residue Asp-800 participates in Mg(2+) binding. Cys-858 and Cys-861 together coordinate Zn(2+).

The protein belongs to the RNase E/G family. Part of a chloroplastic degradosome-like complex. Interacts with RHON1. A homotetramer formed by a dimer of dimers. Mg(2+) is required as a cofactor. The cofactor is Zn(2+). Expressed in cotyledons, rosette and cauline leaves.

Its subcellular location is the plastid. It is found in the chloroplast stroma. Its function is as follows. Involved in intercistronic processing of primary transcripts from chloroplast operons. The endonucleolytic activity of the enzyme depends on the number of phosphates at the 5' end, is inhibited by structured RNA, and preferentially cleaves A/U-rich sequences. In Arabidopsis thaliana (Mouse-ear cress), this protein is Ribonuclease E/G-like protein, chloroplastic (RNE).